The following is a 196-amino-acid chain: Small ribosomal subunit protein uS4c (196 aa).

The disordered stretch occupies residues 15 to 41 (LGALPGLTSKRPRSGSDLKNPLRSGKR). One can recognise an S4 RNA-binding domain in the interval 89–150 (MRLDNILFRL…KQRSKALIQN (62 aa)).

It belongs to the universal ribosomal protein uS4 family. Part of the 30S ribosomal subunit. Contacts protein S5. The interaction surface between S4 and S5 is involved in control of translational fidelity.

Its subcellular location is the plastid. The protein resides in the chloroplast. One of the primary rRNA binding proteins, it binds directly to 16S rRNA where it nucleates assembly of the body of the 30S subunit. In terms of biological role, with S5 and S12 plays an important role in translational accuracy. This is Small ribosomal subunit protein uS4c (rps4) from Narcissus odorus (Campernelle jonquil).